We begin with the raw amino-acid sequence, 456 residues long: Bifunctional protein GlmU (456 aa).

Residues 1–229 (MLNVVILAAG…GWETLGVNSR (229 aa)) form a pyrophosphorylase region. UDP-N-acetyl-alpha-D-glucosamine-binding positions include 7-10 (LAAG), K21, Q73, 78-79 (GT), 103-105 (YGD), G139, E154, N169, and N227. D105 contacts Mg(2+). Residue N227 coordinates Mg(2+). The tract at residues 230-250 (VQQAELERRWQQEQARRQLEA) is linker. Positions 251 to 456 (GVTLADPARF…EGWQRPQKKS (206 aa)) are N-acetyltransferase. 2 residues coordinate UDP-N-acetyl-alpha-D-glucosamine: R333 and K351. The active-site Proton acceptor is H363. UDP-N-acetyl-alpha-D-glucosamine is bound by residues Y366 and N377. Acetyl-CoA-binding positions include A380, 386–387 (NY), S405, A423, and R440.

The protein in the N-terminal section; belongs to the N-acetylglucosamine-1-phosphate uridyltransferase family. In the C-terminal section; belongs to the transferase hexapeptide repeat family. In terms of assembly, homotrimer. Mg(2+) serves as cofactor.

Its subcellular location is the cytoplasm. It catalyses the reaction alpha-D-glucosamine 1-phosphate + acetyl-CoA = N-acetyl-alpha-D-glucosamine 1-phosphate + CoA + H(+). The catalysed reaction is N-acetyl-alpha-D-glucosamine 1-phosphate + UTP + H(+) = UDP-N-acetyl-alpha-D-glucosamine + diphosphate. It functions in the pathway nucleotide-sugar biosynthesis; UDP-N-acetyl-alpha-D-glucosamine biosynthesis; N-acetyl-alpha-D-glucosamine 1-phosphate from alpha-D-glucosamine 6-phosphate (route II): step 2/2. The protein operates within nucleotide-sugar biosynthesis; UDP-N-acetyl-alpha-D-glucosamine biosynthesis; UDP-N-acetyl-alpha-D-glucosamine from N-acetyl-alpha-D-glucosamine 1-phosphate: step 1/1. Its pathway is bacterial outer membrane biogenesis; LPS lipid A biosynthesis. Catalyzes the last two sequential reactions in the de novo biosynthetic pathway for UDP-N-acetylglucosamine (UDP-GlcNAc). The C-terminal domain catalyzes the transfer of acetyl group from acetyl coenzyme A to glucosamine-1-phosphate (GlcN-1-P) to produce N-acetylglucosamine-1-phosphate (GlcNAc-1-P), which is converted into UDP-GlcNAc by the transfer of uridine 5-monophosphate (from uridine 5-triphosphate), a reaction catalyzed by the N-terminal domain. This chain is Bifunctional protein GlmU, found in Bordetella petrii (strain ATCC BAA-461 / DSM 12804 / CCUG 43448).